The chain runs to 259 residues: Glycerol-3-phosphate acyltransferase (259 aa).

7 helical membrane-spanning segments follow: residues 11-31 (IILA…IIIV), 62-82 (LVVA…AILL), 93-112 (TSYF…PIYY), 124-144 (LGLL…VWFI), 152-172 (VSVA…IPYL), 188-208 (FSVA…HYWF), and 211-231 (IWAS…LILG).

The protein belongs to the PlsY family. Probably interacts with PlsX.

Its subcellular location is the cell membrane. It catalyses the reaction an acyl phosphate + sn-glycerol 3-phosphate = a 1-acyl-sn-glycero-3-phosphate + phosphate. Its pathway is lipid metabolism; phospholipid metabolism. Its function is as follows. Catalyzes the transfer of an acyl group from acyl-phosphate (acyl-PO(4)) to glycerol-3-phosphate (G3P) to form lysophosphatidic acid (LPA). This enzyme utilizes acyl-phosphate as fatty acyl donor, but not acyl-CoA or acyl-ACP. In Mycoplasma capricolum subsp. capricolum (strain California kid / ATCC 27343 / NCTC 10154), this protein is Glycerol-3-phosphate acyltransferase.